The following is a 573-amino-acid chain: Mucin-13 (573 aa).

Positions 1-17 (MKGFLLLSLSLLLVTVG) are cleaved as a signal peptide. Residues 16–234 (VGSSSQASST…VPSGGSTGPS (219 aa)) show a composition bias toward low complexity. Residues 16–237 (VGSSSQASST…GGSTGPSDLC (222 aa)) form a disordered region. Topologically, residues 18 to 480 (SSSQASSTTS…FGYSGMNCKD (463 aa)) are extracellular. An EGF-like 1 domain is found at 233–273 (PSDLCNPNPCKGTASCVKLHSKHFCLCLEGYYYNSSLSSCV). Intrachain disulfides connect C237-C248, C242-C257, and C259-C272. 3 N-linked (GlcNAc...) asparagine glycosylation sites follow: N266, N316, and N397. Positions 274 to 391 (KGTTFPGDIS…DYVSINLCDH (118 aa)) constitute an SEA domain. EGF-like domains follow at residues 385-425 (SINL…PFCV) and 425-467 (VAVT…RKCE). Intrachain disulfides connect C389-C402, C394-C408, C410-C424, C429-C441, C433-C451, and C453-C466. The helical transmembrane segment at 481-508 (QFQLILTIVGTIAGALILILLIAFIVSA) threads the bilayer. Residues 509-573 (RSKNKKKDGE…NQRSMPRPDY (65 aa)) lie on the Cytoplasmic side of the membrane. Residues 548-573 (PKVRTGVPSQTPNPYANQRSMPRPDY) are disordered. Polar residues predominate over residues 554–567 (VPSQTPNPYANQRS).

As to quaternary structure, homodimer of beta subunits. Cleaved into two subunits, alpha and beta, probably between the first EGF domain and the SEA domain. Beta subunit contains the cytoplasmic tail and alpha subunit the extracellular tail. The homooligomerization into dimers is dependent on intrachain disulfide bonds. Post-translationally, highly N-glycosylated.

It is found in the cell membrane. Its subcellular location is the secreted. Functionally, epithelial and hemopoietic transmembrane mucin that may play a role in cell signaling. This is Mucin-13 (Muc13) from Mus musculus (Mouse).